We begin with the raw amino-acid sequence, 767 residues long: DNA topoisomerase 1 (767 aa).

Basic and acidic residues predominate over residues 1 to 23; it reads MSGDHLHNDSQIEADFRLNDSHK. A disordered region spans residues 1–201; that stretch reads MSGDHLHNDS…NKKKKPKKEE (201 aa). An N-acetylserine modification is found at Ser2. Phosphoserine occurs at positions 2 and 10. Residues 24 to 39 show a composition bias toward basic residues; the sequence is HKDKHKDREHRHKEHK. A compositionally biased stretch (basic and acidic residues) spans 40 to 110; that stretch reads KDKDKDREKS…DAKIKKEKEN (71 aa). Residue Ser59 is modified to Phosphoserine. Lys103 is covalently cross-linked (Glycyl lysine isopeptide (Lys-Gly) (interchain with G-Cter in SUMO2)). Lys105 is covalently cross-linked (Glycyl lysine isopeptide (Lys-Gly) (interchain with G-Cter in SUMO); alternate). Lys105 participates in a covalent cross-link: Glycyl lysine isopeptide (Lys-Gly) (interchain with G-Cter in SUMO2); alternate. At Ser114 the chain carries Phosphoserine. A Glycyl lysine isopeptide (Lys-Gly) (interchain with G-Cter in SUMO); alternate cross-link involves residue Lys119. A Glycyl lysine isopeptide (Lys-Gly) (interchain with G-Cter in SUMO2); alternate cross-link involves residue Lys119. A Glycyl lysine isopeptide (Lys-Gly) (interchain with G-Cter in SUMO1); alternate cross-link involves residue Lys119. Positions 131-168 are enriched in basic and acidic residues; that stretch reads PKEDIKPLKRLRDEDDADYKPKKIKTEDIKKEKKRKSE. Residues Lys136 and Lys150 each participate in a glycyl lysine isopeptide (Lys-Gly) (interchain with G-Cter in SUMO2) cross-link. A Glycyl lysine isopeptide (Lys-Gly) (interchain with G-Cter in SUMO); alternate cross-link involves residue Lys155. Lys155 is covalently cross-linked (Glycyl lysine isopeptide (Lys-Gly) (interchain with G-Cter in SUMO2); alternate). Residues Lys160 and Lys166 each participate in a glycyl lysine isopeptide (Lys-Gly) (interchain with G-Cter in SUMO2) cross-link. Lys174 participates in a covalent cross-link: Glycyl lysine isopeptide (Lys-Gly) (interchain with G-Cter in SUMO2); alternate. Lys174 carries the N6-acetyllysine; alternate modification. Over residues 181–201 the composition is skewed to basic and acidic residues; sequence KDKDKKVAEPDNKKKKPKKEE. A Glycyl lysine isopeptide (Lys-Gly) (interchain with G-Cter in SUMO2) cross-link involves residue Lys206. An N6-acetyllysine modification is found at Lys282. Lys338 participates in a covalent cross-link: Glycyl lysine isopeptide (Lys-Gly) (interchain with G-Cter in SUMO2). Interaction with DNA regions lie at residues 427 to 428 and 490 to 495; these read KY and RAGNEK. A Topo IB-type catalytic domain is found at 434 to 767; it reads SSRIKGEKDW…IDMTDEDYEF (334 aa). Ser508 carries the post-translational modification Phosphoserine; by CK2. Lys551 is covalently cross-linked (Glycyl lysine isopeptide (Lys-Gly) (interchain with G-Cter in SUMO2)). Residues 587–589 are interaction with DNA; it reads TAK. Residues Lys644, Lys702, and Lys714 each participate in a glycyl lysine isopeptide (Lys-Gly) (interchain with G-Cter in SUMO2) cross-link. The active-site O-(3'-phospho-DNA)-tyrosine intermediate is the Tyr725.

It belongs to the type IB topoisomerase family. As to quaternary structure, monomer. Interacts with ERCC6. Interacts with TPRN; TPRN interacts with a number of DNA damage response proteins, is recruited to sites of DNA damage and may play a role in DNA damage repair. In terms of processing, sumoylated. Lys-119 is the main site of sumoylation. Sumoylation plays a role in partitioning TOP1 between nucleoli and nucleoplasm. Levels are dramatically increased on camptothecin (CPT) treatment. Post-translationally, phosphorylation at Ser-508 by CK2 increases binding to supercoiled DNA and sensitivity to camptothecin.

The protein localises to the nucleus. It localises to the nucleolus. Its subcellular location is the nucleoplasm. The enzyme catalyses ATP-independent breakage of single-stranded DNA, followed by passage and rejoining.. Its function is as follows. Releases the supercoiling and torsional tension of DNA introduced during the DNA replication and transcription by transiently cleaving and rejoining one strand of the DNA duplex. Introduces a single-strand break via transesterification at a target site in duplex DNA. The scissile phosphodiester is attacked by the catalytic tyrosine of the enzyme, resulting in the formation of a DNA-(3'-phosphotyrosyl)-enzyme intermediate and the expulsion of a 5'-OH DNA strand. The free DNA strand then rotates around the intact phosphodiester bond on the opposing strand, thus removing DNA supercoils. Finally, in the religation step, the DNA 5'-OH attacks the covalent intermediate to expel the active-site tyrosine and restore the DNA phosphodiester backbone. Regulates the alternative splicing of tissue factor (F3) pre-mRNA in endothelial cells. Involved in the circadian transcription of the core circadian clock component BMAL1 by altering the chromatin structure around the ROR response elements (ROREs) on the BMAL1 promoter. The polypeptide is DNA topoisomerase 1 (Top1) (Mus musculus (Mouse)).